A 407-amino-acid chain; its full sequence is Acetate kinase (407 aa).

Residue Asn10 participates in Mg(2+) binding. Lys17 is a binding site for ATP. Residue Arg91 participates in substrate binding. Asp150 functions as the Proton donor/acceptor in the catalytic mechanism. ATP contacts are provided by residues 210–214 (HLGNG), 285–287 (DCR), and 338–342 (GIGEN). Mg(2+) is bound at residue Glu392.

The protein belongs to the acetokinase family. In terms of assembly, homodimer. It depends on Mg(2+) as a cofactor. Mn(2+) is required as a cofactor.

It localises to the cytoplasm. The enzyme catalyses acetate + ATP = acetyl phosphate + ADP. It participates in metabolic intermediate biosynthesis; acetyl-CoA biosynthesis; acetyl-CoA from acetate: step 1/2. Functionally, catalyzes the formation of acetyl phosphate from acetate and ATP. Can also catalyze the reverse reaction. The chain is Acetate kinase from Mannheimia succiniciproducens (strain KCTC 0769BP / MBEL55E).